The following is a 28-amino-acid chain: NU-theraphotoxin-Preg1a (28 aa).

Intrachain disulfides connect Cys-2-Cys-19, Cys-9-Cys-22, and Cys-18-Cys-27.

In terms of tissue distribution, expressed by the venom gland.

The protein localises to the secreted. Toxin that acts as an agonist on melanocortin receptors (MC1R, MC3R, MC5R, MC5R). After binding to MC1R, the peptide activates the hMC1R/Gs pathway, but after binding to MC4R, it is not able to activate or antagonize the MC4R/Gs pathway. Inhibits melanocyte stimulating hormone (MSH)-binding to human receptors (Ki=1.8 uM to MC1R, Ki=19.8 uM to MC3R, Ki=7.1 uM to MC4R, Ki=10.0 uM to MC5R). This toxin is structurally unrelated to the natural agonists. In Poecilotheria regalis (Indian ornamental tree spider), this protein is NU-theraphotoxin-Preg1a.